Reading from the N-terminus, the 91-residue chain is Class I hydrophobin E (91 aa).

The N-terminal stretch at 1–16 (MKFSIAAIALAAVAVA) is a signal peptide. 4 disulfide bridges follow: Cys30-Cys72, Cys42-Cys64, Cys43-Cys55, and Cys73-Cys89. The N-linked (GlcNAc...) asparagine glycan is linked to Asn83.

This sequence belongs to the fungal hydrophobin family.

The protein localises to the secreted. Its subcellular location is the cell wall. It is found in the vacuole. The protein resides in the cytoplasmic vesicle. Its function is as follows. Aerial growth, conidiation, and dispersal of filamentous fungi in the environment rely upon a capability of their secreting small amphipathic proteins called hydrophobins (HPBs) with low sequence identity. Class I can self-assemble into an outermost layer of rodlet bundles on aerial cell surfaces, conferring cellular hydrophobicity that supports fungal growth, development and dispersal; whereas Class II form highly ordered films at water-air interfaces through intermolecular interactions but contribute nothing to the rodlet structure. Hyd1E contributes to certain cell wall-related features, such as hydrophobicity but is not involved in cell wall-related events during fungal proliferation in host hemocoel. Does not contribute to conidial hydrophobicity. The polypeptide is Class I hydrophobin E (Beauveria bassiana (strain ARSEF 2860) (White muscardine disease fungus)).